Reading from the N-terminus, the 94-residue chain is Co-chaperonin GroES (94 aa).

The protein belongs to the GroES chaperonin family. Heptamer of 7 subunits arranged in a ring. Interacts with the chaperonin GroEL.

The protein localises to the cytoplasm. Its function is as follows. Together with the chaperonin GroEL, plays an essential role in assisting protein folding. The GroEL-GroES system forms a nano-cage that allows encapsulation of the non-native substrate proteins and provides a physical environment optimized to promote and accelerate protein folding. GroES binds to the apical surface of the GroEL ring, thereby capping the opening of the GroEL channel. The chain is Co-chaperonin GroES from Latilactobacillus sakei subsp. sakei (strain 23K) (Lactobacillus sakei subsp. sakei).